The sequence spans 427 residues: Serine--tRNA ligase (427 aa).

233 to 235 (TAE) provides a ligand contact to L-serine. 264 to 266 (RSE) provides a ligand contact to ATP. Glu287 is a binding site for L-serine. 351 to 354 (EISS) contacts ATP. Ser386 contributes to the L-serine binding site.

Belongs to the class-II aminoacyl-tRNA synthetase family. Type-1 seryl-tRNA synthetase subfamily. As to quaternary structure, homodimer. The tRNA molecule binds across the dimer.

The protein localises to the cytoplasm. It catalyses the reaction tRNA(Ser) + L-serine + ATP = L-seryl-tRNA(Ser) + AMP + diphosphate + H(+). The catalysed reaction is tRNA(Sec) + L-serine + ATP = L-seryl-tRNA(Sec) + AMP + diphosphate + H(+). It functions in the pathway aminoacyl-tRNA biosynthesis; selenocysteinyl-tRNA(Sec) biosynthesis; L-seryl-tRNA(Sec) from L-serine and tRNA(Sec): step 1/1. Its function is as follows. Catalyzes the attachment of serine to tRNA(Ser). Is also able to aminoacylate tRNA(Sec) with serine, to form the misacylated tRNA L-seryl-tRNA(Sec), which will be further converted into selenocysteinyl-tRNA(Sec). In Thiobacillus denitrificans (strain ATCC 25259 / T1), this protein is Serine--tRNA ligase.